The primary structure comprises 828 residues: MEKTYNPQEIERKWQRNWQEKDAFKVSNEEYHKKYYDLVMFPYPSGTLHVGHVKNYVIGDVIARYKRMRGYNVMHPFGFDAFGLPAENAAIEKGNIHPEDWTMQNINIIRNQIKKLGISYNWEREVITCKEDYYKWTQWIFLQLYKNGLAYKKKAPVNWCPNCKTVLANEQVVNGKCERCGTVVEIKQLEQWYFKITDYAEKLLYDLEKLSGWPENVKIMQKNWIGKSVGAEVEFNLDNGKGSLRVFTTRPDTLWGVTFMALAPESPLVEELTTPENSEKVNQFLQRVSLQDRFKRTAEGAEKEGVFTGSYAINPVNGEKIPIYVANYILYEYGTGAIMAVPAHDQRDFEFAKKYDLPIRIVIMPEGDELTEENLEKAYIGEGVLVNSGEFTGLDNQTAIREVSQWLEDKKIGKVVTQYKLRDWLISRQRYWGAPIPVVYCEKCGVVPVPEKDLPVKLPRDVAFEPTGKSPLIDHPDFKETTCPKCGGKAKREVDTMDTFVDSSWYYLRYVNPKLEDKPFNKEDVDNWLPVDQYIGGVEHAILHLLYSRFITKVLKDLGYVSFDEPFKNLFTQGMIYRNGAKMSKSKGNVVSPEEMIEKYGTDALRTYILFMAPPERDAEWNDSGIEGTYRFLNKVWNTYMKIQDKIIHLENKPNYPLKNKSEKDLRRKLHQTIEKITSDIEGNFQFNTAVSSLMELLNELNSYLNNTDDKDWNLNLLKEFSEDFVLMLSPIAPHISEELWKNFGKDEFIFKASWPEIDKNALKAEEITLAVQINGKLRAQITVDVSLNEDEVKSYALEDDKVQKYISGKKIQKIIYVPKKIINIVVK.

The 'HIGH' region signature appears at 42–52 (PYPSGTLHVGH). Positions 582–586 (KMSKS) match the 'KMSKS' region motif. Lys585 serves as a coordination point for ATP.

The protein belongs to the class-I aminoacyl-tRNA synthetase family.

It localises to the cytoplasm. The enzyme catalyses tRNA(Leu) + L-leucine + ATP = L-leucyl-tRNA(Leu) + AMP + diphosphate. This is Leucine--tRNA ligase from Petrotoga mobilis (strain DSM 10674 / SJ95).